The primary structure comprises 251 residues: uncharacterized protein (251 aa).

In terms of domain architecture, AMMECR1 spans Lys-21–Leu-246.

This is an uncharacterized protein from Saccharomyces cerevisiae (strain ATCC 204508 / S288c) (Baker's yeast).